The sequence spans 218 residues: Thiopurine S-methyltransferase (218 aa).

S-adenosyl-L-methionine contacts are provided by tryptophan 10, leucine 45, glutamate 66, and arginine 123.

Belongs to the class I-like SAM-binding methyltransferase superfamily. TPMT family.

It is found in the cytoplasm. The catalysed reaction is S-adenosyl-L-methionine + a thiopurine = S-adenosyl-L-homocysteine + a thiopurine S-methylether.. The chain is Thiopurine S-methyltransferase from Shewanella loihica (strain ATCC BAA-1088 / PV-4).